A 466-amino-acid chain; its full sequence is 3-isopropylmalate dehydratase large subunit (466 aa).

Residues cysteine 347, cysteine 407, and cysteine 410 each contribute to the [4Fe-4S] cluster site.

The protein belongs to the aconitase/IPM isomerase family. LeuC type 1 subfamily. As to quaternary structure, heterodimer of LeuC and LeuD. The cofactor is [4Fe-4S] cluster.

It catalyses the reaction (2R,3S)-3-isopropylmalate = (2S)-2-isopropylmalate. The protein operates within amino-acid biosynthesis; L-leucine biosynthesis; L-leucine from 3-methyl-2-oxobutanoate: step 2/4. Functionally, catalyzes the isomerization between 2-isopropylmalate and 3-isopropylmalate, via the formation of 2-isopropylmaleate. This Escherichia coli (strain 55989 / EAEC) protein is 3-isopropylmalate dehydratase large subunit.